The chain runs to 638 residues: Acetolactate synthase 2, chloroplastic (638 aa).

Residues 1 to 39 (MATAATAAAALTGATTATPKSRRRAHHLATRRALAAPIR) constitute a chloroplast transit peptide. Residues 44–67 (SRATPTAPPATPLRPWGPNEPRKG) form a disordered region. Residue Glu-112 participates in thiamine diphosphate binding. The cysteines at positions 132 and 278 are disulfide-linked. Residues Arg-214, 320-341 (HGTV…FGVR), and 363-382 (DIDP…ICAD) each bind FAD. The tract at residues 455–535 (QHQMWAAQYY…VKVFVLNNQH (81 aa)) is thiamine pyrophosphate binding. Positions 506 and 533 each coordinate Mg(2+).

This sequence belongs to the TPP enzyme family. Mg(2+) is required as a cofactor. Requires thiamine diphosphate as cofactor.

It is found in the plastid. Its subcellular location is the chloroplast. The enzyme catalyses 2 pyruvate + H(+) = (2S)-2-acetolactate + CO2. It participates in amino-acid biosynthesis; L-isoleucine biosynthesis; L-isoleucine from 2-oxobutanoate: step 1/4. It functions in the pathway amino-acid biosynthesis; L-valine biosynthesis; L-valine from pyruvate: step 1/4. In Zea mays (Maize), this protein is Acetolactate synthase 2, chloroplastic (ALS2).